The sequence spans 264 residues: MDAAAAAGGEMSRQKATASAPPPPELDMVARAVQRLVARNDAVEALSGGGEAAAGLGAGMAAFEAARGAPAPRIGVAQYLERVHRYAGLEPECYVVAYAYVDMAAHRRPAAAVASRNVHRLLLACLLVASKVLDDFHHNNAFFARVGGVSNAEMNRLELELLAVLDFEVMLSHRVYELYREHLEKEARRDGGGGDMLAGASAAAAAKAGRMAAVSPSKLLERAAVNGAAQHDDWRSLGTAAAAEAANGVRRHRSSSSSRYSFDC.

Positions 1-25 (MDAAAAAGGEMSRQKATASAPPPPE) are disordered.

The protein belongs to the cyclin family. Cyclin U/P subfamily.

This is Cyclin-P1-1 (CYCP1-1) from Oryza sativa subsp. japonica (Rice).